The sequence spans 824 residues: MEDFSSFDKNKVSVDSMKRAILDRLYLSVVQSPESASPRDIFTAVAKTVMEWLAKGWLKTQNGYYKNDVKRVYYLSMEFLLGRSLKSNLLNLGILDLVRKALKTLNYDFDHLVEMESDAGLGNGGLGRLAACYLDSMATLAVPAYGYGIRYDYGIFDQRIVNGYQEEAPDEWLRYGNPWEICRGEYLYPVRFYGRVIHYTDSRGKQVADLVDTQEVLAMAYDIPIPGYGNDTVNSLRLWQAQSPRGFEFSYFNHGNYIQAIEDIALIENISRVLYPNDSITEGQELRLKQEYFLVSATIQDIIRRYTKTHICLDNLADKVVVQLNDTHPALGIAEMMHILVDREELPWDKAWEMTTVIFNYTNHTILPEALERWPLDLFSKLLPRHLEIIYEINSRWLEKVGSRYPKNDDKRRSLSIVEEGYQKRINMANLAVVGSAKVNGVSSFHSQLIKDTLFKEFYEFFPEKFINVTNGVTPRRWIALCNPRLSKLLNETIGDRYIIDLSHLSLIRSFAEDSGFRDHWKGVKLKNKQDLTSRIYNEVGEIVDPNSLFDCHIKRIHEYKRQLMNILRVIYVYNDLKENPNQDVVPTTVIFSGKAAPGYVMAKLIIKLINSVADVVNQDSRVNDKLKVLFLPNYRVSMAEHIIPGTDLSEQISTAGMEASGTGNMKFALNGALTIGTMDGANIEMAEHIGKENMFIFGLLEEQIVQLRREYCPQTICDKNPKIRQVLDLLEQGFFNSNDKDLFKPIVHRLLHEGDPFFVLADLESYIAAHENVNKLFKEPDSWTKISIYNTAGMGFFSSDRAIQDYARDIWHVPTKSCSGEGN.

Position 667 is an N6-(pyridoxal phosphate)lysine (K667).

The protein belongs to the glycogen phosphorylase family. Pyridoxal 5'-phosphate is required as a cofactor.

The enzyme catalyses [(1-&gt;4)-alpha-D-glucosyl](n) + phosphate = [(1-&gt;4)-alpha-D-glucosyl](n-1) + alpha-D-glucose 1-phosphate. Phosphorylase is an important allosteric enzyme in carbohydrate metabolism. Enzymes from different sources differ in their regulatory mechanisms and in their natural substrates. However, all known phosphorylases share catalytic and structural properties. This chain is Glycogen phosphorylase (glgP), found in Chlamydia pneumoniae (Chlamydophila pneumoniae).